The chain runs to 118 residues: Small ribosomal subunit protein uS13 (118 aa).

Residues 94–118 (SLPVRGQRTKTNARTRKGPRKAIKK) form a disordered region.

The protein belongs to the universal ribosomal protein uS13 family. In terms of assembly, part of the 30S ribosomal subunit. Forms a loose heterodimer with protein S19. Forms two bridges to the 50S subunit in the 70S ribosome.

Functionally, located at the top of the head of the 30S subunit, it contacts several helices of the 16S rRNA. In the 70S ribosome it contacts the 23S rRNA (bridge B1a) and protein L5 of the 50S subunit (bridge B1b), connecting the 2 subunits; these bridges are implicated in subunit movement. Contacts the tRNAs in the A and P-sites. The sequence is that of Small ribosomal subunit protein uS13 from Aeromonas hydrophila subsp. hydrophila (strain ATCC 7966 / DSM 30187 / BCRC 13018 / CCUG 14551 / JCM 1027 / KCTC 2358 / NCIMB 9240 / NCTC 8049).